The following is a 195-amino-acid chain: Der GTPase-activating protein YihI (195 aa).

A disordered region spans residues 1–81 (MSRTKKTRRI…KAVVKEVKDP (81 aa)). Basic and acidic residues-rich tracts occupy residues 9–23 (RITD…DKPK), 38–49 (TRYELDAQAREE), and 66–81 (DPAE…VKDP).

It belongs to the YihI family. Interacts with Der.

Functionally, a GTPase-activating protein (GAP) that modifies Der/EngA GTPase function. May play a role in ribosome biogenesis. This Mannheimia haemolytica (Pasteurella haemolytica) protein is Der GTPase-activating protein YihI.